The chain runs to 314 residues: Methionyl-tRNA formyltransferase (314 aa).

110 to 113 (SLLP) lines the (6S)-5,6,7,8-tetrahydrofolate pocket.

This sequence belongs to the Fmt family.

It catalyses the reaction L-methionyl-tRNA(fMet) + (6R)-10-formyltetrahydrofolate = N-formyl-L-methionyl-tRNA(fMet) + (6S)-5,6,7,8-tetrahydrofolate + H(+). Functionally, attaches a formyl group to the free amino group of methionyl-tRNA(fMet). The formyl group appears to play a dual role in the initiator identity of N-formylmethionyl-tRNA by promoting its recognition by IF2 and preventing the misappropriation of this tRNA by the elongation apparatus. The protein is Methionyl-tRNA formyltransferase of Bacillus cereus (strain B4264).